The chain runs to 631 residues: Phosphomethylpyrimidine synthase (631 aa).

Residues Asn-239, Met-268, Tyr-297, His-333, 353 to 355 (SRG), 394 to 397 (DGLR), and Glu-433 contribute to the substrate site. His-437 provides a ligand contact to Zn(2+). Tyr-460 serves as a coordination point for substrate. Residue His-501 participates in Zn(2+) binding. Positions 581, 584, and 589 each coordinate [4Fe-4S] cluster.

Belongs to the ThiC family. In terms of assembly, homodimer. It depends on [4Fe-4S] cluster as a cofactor.

The enzyme catalyses 5-amino-1-(5-phospho-beta-D-ribosyl)imidazole + S-adenosyl-L-methionine = 4-amino-2-methyl-5-(phosphooxymethyl)pyrimidine + CO + 5'-deoxyadenosine + formate + L-methionine + 3 H(+). It participates in cofactor biosynthesis; thiamine diphosphate biosynthesis. Catalyzes the synthesis of the hydroxymethylpyrimidine phosphate (HMP-P) moiety of thiamine from aminoimidazole ribotide (AIR) in a radical S-adenosyl-L-methionine (SAM)-dependent reaction. This is Phosphomethylpyrimidine synthase from Salmonella arizonae (strain ATCC BAA-731 / CDC346-86 / RSK2980).